The following is a 319-amino-acid chain: MTTQTSTGLRHQTVLLDEAVDALIWRDDGIYIDGTFGRGGHSRRILERLGPGGRLVAFDKDPAAITEAGTVEDARFAIEHDSFAQMARCLDARGVEQVAGVLLDLGISSPQIDEGARGFSFRMDGPLDMRMDTTRGITAAQWLAEADERDIARVIRDYGEERFAVQIAKAIVARRGQSGDRGPLDRTSELAALVAQAVKTREKGQDPATRTFQALRIHVNQELADLETGLKAAFDRLEQGGRLVVISFHSLEDRIVKRFMQALARPEQSAAPELRRAPLRAHELPAPQLRLLGRVKPSEAEVSANPRARSAIMRVAERC.

S-adenosyl-L-methionine contacts are provided by residues 39-41, Asp-59, Phe-83, Asp-104, and Gln-111; that span reads GGH.

The protein belongs to the methyltransferase superfamily. RsmH family.

It is found in the cytoplasm. It carries out the reaction cytidine(1402) in 16S rRNA + S-adenosyl-L-methionine = N(4)-methylcytidine(1402) in 16S rRNA + S-adenosyl-L-homocysteine + H(+). Its function is as follows. Specifically methylates the N4 position of cytidine in position 1402 (C1402) of 16S rRNA. The protein is Ribosomal RNA small subunit methyltransferase H of Ralstonia pickettii (strain 12J).